An 815-amino-acid polypeptide reads, in one-letter code: Probable bifunctional folylpolyglutamate synthase/dihydropteroate synthase (815 aa).

The interval 1–416 (MRYDEAANFL…LVAGSLFAVA (416 aa)) is folylpolyglutamate synthase. 47–53 (GSNGKGS) provides a ligand contact to ATP. One can recognise a Pterin-binding domain in the interval 553 to 803 (TAVMGILNVT…DVPENVAAVR (251 aa)). Residues 555-815 (VMGILNVTPD…EATRTGADAE (261 aa)) are DHPS. Residue asparagine 560 coordinates Mg(2+). Residues threonine 600, aspartate 633, asparagine 652, aspartate 722, lysine 758, and 791 to 793 (RVH) contribute to the (7,8-dihydropterin-6-yl)methyl diphosphate site.

This sequence in the N-terminal section; belongs to the folylpolyglutamate synthase family. The protein in the C-terminal section; belongs to the DHPS family. It depends on Mg(2+) as a cofactor.

It carries out the reaction (6S)-5,6,7,8-tetrahydrofolyl-(gamma-L-Glu)(n) + L-glutamate + ATP = (6S)-5,6,7,8-tetrahydrofolyl-(gamma-L-Glu)(n+1) + ADP + phosphate + H(+). The enzyme catalyses (7,8-dihydropterin-6-yl)methyl diphosphate + 4-aminobenzoate = 7,8-dihydropteroate + diphosphate. Its pathway is cofactor biosynthesis; tetrahydrofolylpolyglutamate biosynthesis. It participates in cofactor biosynthesis; tetrahydrofolate biosynthesis; 7,8-dihydrofolate from 2-amino-4-hydroxy-6-hydroxymethyl-7,8-dihydropteridine diphosphate and 4-aminobenzoate: step 1/2. Functionally, can complement an H.volcanii mutant strain that is thymidine auxotroph because it lacks the two dihydrofolate reductase genes encoded by hdrA and hdrB. The sequence is that of Probable bifunctional folylpolyglutamate synthase/dihydropteroate synthase (folP) from Halobacterium salinarum (strain ATCC 700922 / JCM 11081 / NRC-1) (Halobacterium halobium).